The chain runs to 237 residues: Ribosomal RNA small subunit methyltransferase G (237 aa).

Residues Gly76, Phe81, 128-129, and Arg147 contribute to the S-adenosyl-L-methionine site; that span reads VE.

It belongs to the methyltransferase superfamily. RNA methyltransferase RsmG family.

The protein localises to the cytoplasm. Specifically methylates the N7 position of a guanine in 16S rRNA. The polypeptide is Ribosomal RNA small subunit methyltransferase G (Prochlorococcus marinus (strain MIT 9215)).